An 897-amino-acid polypeptide reads, in one-letter code: Alanine--tRNA ligase (897 aa).

Zn(2+) contacts are provided by histidine 591, histidine 595, cysteine 695, and histidine 699.

This sequence belongs to the class-II aminoacyl-tRNA synthetase family. It depends on Zn(2+) as a cofactor.

It is found in the cytoplasm. It catalyses the reaction tRNA(Ala) + L-alanine + ATP = L-alanyl-tRNA(Ala) + AMP + diphosphate. Its function is as follows. Catalyzes the attachment of alanine to tRNA(Ala) in a two-step reaction: alanine is first activated by ATP to form Ala-AMP and then transferred to the acceptor end of tRNA(Ala). Also edits incorrectly charged Ser-tRNA(Ala) and Gly-tRNA(Ala) via its editing domain. The chain is Alanine--tRNA ligase from Methanobrevibacter smithii (strain ATCC 35061 / DSM 861 / OCM 144 / PS).